The sequence spans 471 residues: ATP synthase subunit beta (471 aa).

ATP is bound at residue G154 to T161.

This sequence belongs to the ATPase alpha/beta chains family. F-type ATPases have 2 components, CF(1) - the catalytic core - and CF(0) - the membrane proton channel. CF(1) has five subunits: alpha(3), beta(3), gamma(1), delta(1), epsilon(1). CF(0) has three main subunits: a(1), b(2) and c(9-12). The alpha and beta chains form an alternating ring which encloses part of the gamma chain. CF(1) is attached to CF(0) by a central stalk formed by the gamma and epsilon chains, while a peripheral stalk is formed by the delta and b chains.

The protein localises to the cell membrane. It catalyses the reaction ATP + H2O + 4 H(+)(in) = ADP + phosphate + 5 H(+)(out). In terms of biological role, produces ATP from ADP in the presence of a proton gradient across the membrane. The catalytic sites are hosted primarily by the beta subunits. This Mesomycoplasma hyopneumoniae (strain 232) (Mycoplasma hyopneumoniae) protein is ATP synthase subunit beta.